Consider the following 113-residue polypeptide: Transcriptional regulator RamA (113 aa).

The HTH araC/xylS-type domain maps to 9 to 107 (DTIVEWIDDN…NLPPGAYRKE (99 aa)). DNA-binding regions (H-T-H motif) lie at residues 26–47 (DDIA…MQYK) and 74–97 (VYDI…TRTF).

Transcriptional regulator. Binds to regulatory regions of target genes, including efflux pump operon acrAB and outer membrane protein gene tolC. Represses transcription of genes belonging to the flagellar regulon, including flhD, flhB and fliC; probably thereby leading to repression of motility. Represses expression of the flhDC operon in a post-transcriptional manner. Activates expression of acrAB, perhaps thereby conferring multidrug resistance. Involved in indole- and bile-mediated regulation of acrAB; binding of bile to RamA may contribute to activation of expression of acrAB. Plays a role in regulating virulence in mice. The protein is Transcriptional regulator RamA of Salmonella typhimurium (strain LT2 / SGSC1412 / ATCC 700720).